A 412-amino-acid polypeptide reads, in one-letter code: Peptidase T (412 aa).

Position 84 (His84) interacts with Zn(2+). Residue Asp86 is part of the active site. Residue Asp146 participates in Zn(2+) binding. Residue Glu179 is the Proton acceptor of the active site. Residues Glu180, Asp202, and His385 each coordinate Zn(2+).

Belongs to the peptidase M20B family. Requires Zn(2+) as cofactor.

It is found in the cytoplasm. The catalysed reaction is Release of the N-terminal residue from a tripeptide.. Its function is as follows. Cleaves the N-terminal amino acid of tripeptides. This chain is Peptidase T, found in Haemophilus influenzae (strain PittEE).